The chain runs to 329 residues: Acetyl-coenzyme A carboxylase carboxyl transferase subunit alpha (329 aa).

The 255-residue stretch at Gln-40–Glu-294 folds into the CoA carboxyltransferase C-terminal domain.

Belongs to the AccA family. As to quaternary structure, acetyl-CoA carboxylase is a heterohexamer composed of biotin carboxyl carrier protein (AccB), biotin carboxylase (AccC) and two subunits each of ACCase subunit alpha (AccA) and ACCase subunit beta (AccD).

Its subcellular location is the cytoplasm. The catalysed reaction is N(6)-carboxybiotinyl-L-lysyl-[protein] + acetyl-CoA = N(6)-biotinyl-L-lysyl-[protein] + malonyl-CoA. It participates in lipid metabolism; malonyl-CoA biosynthesis; malonyl-CoA from acetyl-CoA: step 1/1. Functionally, component of the acetyl coenzyme A carboxylase (ACC) complex. First, biotin carboxylase catalyzes the carboxylation of biotin on its carrier protein (BCCP) and then the CO(2) group is transferred by the carboxyltransferase to acetyl-CoA to form malonyl-CoA. This chain is Acetyl-coenzyme A carboxylase carboxyl transferase subunit alpha, found in Prochlorococcus marinus (strain MIT 9211).